The chain runs to 444 residues: Spermatogenesis-associated protein 1 (444 aa).

Residues 268–403 adopt a coiled-coil conformation; the sequence is SLLKIEREKI…RKLDTDKMKL (136 aa).

As to quaternary structure, interacts with IFT20. As to expression, highly abundant in the testis, and is also expressed in the heart and kidney (at protein level).

It is found in the cytoplasmic vesicle. It localises to the secretory vesicle. The protein resides in the acrosome. This Mus musculus (Mouse) protein is Spermatogenesis-associated protein 1 (Spata1).